The following is a 619-amino-acid chain: Translation initiation factor IF-2 (619 aa).

2 stretches are compositionally biased toward low complexity: residues 1–18 (MTLN…TTPK) and 98–111 (PPQL…LTKT). Disordered stretches follow at residues 1–24 (MTLN…KETD) and 90–113 (SEPQ…KTKP). Residues 121–289 (KKSPIVTIMG…ILLVSEIQNL (169 aa)) form the tr-type G domain. Positions 130–137 (GHVDHGKT) are G1. 130–137 (GHVDHGKT) serves as a coordination point for GTP. Residues 155 to 159 (GITQH) are G2. Positions 176-179 (DTPG) are G3. GTP is bound by residues 176 to 180 (DTPGH) and 230 to 233 (NKID). Positions 230–233 (NKID) are G4. Positions 266–268 (SAL) are G5.

The protein belongs to the TRAFAC class translation factor GTPase superfamily. Classic translation factor GTPase family. IF-2 subfamily.

It is found in the cytoplasm. In terms of biological role, one of the essential components for the initiation of protein synthesis. Protects formylmethionyl-tRNA from spontaneous hydrolysis and promotes its binding to the 30S ribosomal subunits. Also involved in the hydrolysis of GTP during the formation of the 70S ribosomal complex. This is Translation initiation factor IF-2 from Onion yellows phytoplasma (strain OY-M).